A 416-amino-acid chain; its full sequence is Tyrosine--tRNA ligase (416 aa).

L-tyrosine is bound at residue Tyr-40. The 'HIGH' region signature appears at 45-54 (ATAASLHVGH). 2 residues coordinate L-tyrosine: Tyr-177 and Gln-181. Residues 237 to 241 (KMGKS) carry the 'KMSKS' region motif. Lys-240 serves as a coordination point for ATP. Positions 351–416 (LSVTHFLVAA…RKKHKLVRLA (66 aa)) constitute an S4 RNA-binding domain.

Belongs to the class-I aminoacyl-tRNA synthetase family. TyrS type 1 subfamily. As to quaternary structure, homodimer.

It is found in the cytoplasm. The catalysed reaction is tRNA(Tyr) + L-tyrosine + ATP = L-tyrosyl-tRNA(Tyr) + AMP + diphosphate + H(+). In terms of biological role, catalyzes the attachment of tyrosine to tRNA(Tyr) in a two-step reaction: tyrosine is first activated by ATP to form Tyr-AMP and then transferred to the acceptor end of tRNA(Tyr). The protein is Tyrosine--tRNA ligase of Cereibacter sphaeroides (strain ATCC 17025 / ATH 2.4.3) (Rhodobacter sphaeroides).